Reading from the N-terminus, the 259-residue chain is Malonyl-[acyl-carrier protein] O-methyltransferase 2 (259 aa).

Belongs to the methyltransferase superfamily.

It catalyses the reaction malonyl-[ACP] + S-adenosyl-L-methionine = malonyl-[ACP] methyl ester + S-adenosyl-L-homocysteine. It functions in the pathway cofactor biosynthesis; biotin biosynthesis. Its function is as follows. Converts the free carboxyl group of a malonyl-thioester to its methyl ester by transfer of a methyl group from S-adenosyl-L-methionine (SAM). It allows to synthesize pimeloyl-ACP via the fatty acid synthetic pathway. The sequence is that of Malonyl-[acyl-carrier protein] O-methyltransferase 2 from Ilyobacter polytropus (strain ATCC 51220 / DSM 2926 / LMG 16218 / CuHBu1).